A 344-amino-acid chain; its full sequence is 3,4-dihydroxy-2-butanone 4-phosphate synthase (344 aa).

Positions 1–202 (MILKRVTEAL…VSDLISYRLE (202 aa)) are DHBP synthase. D-ribulose 5-phosphate-binding positions include 27-28 (RE), Asp-32, 139-143 (RTGHT), and Glu-163. Residue Glu-28 participates in Mg(2+) binding. His-142 provides a ligand contact to Mg(2+). The GTP cyclohydrolase II-like stretch occupies residues 203-344 (NESLLKMFCQ…GLKLVETISL (142 aa)).

The protein in the N-terminal section; belongs to the DHBP synthase family. In the C-terminal section; belongs to the GTP cyclohydrolase II family. Mg(2+) serves as cofactor. Mn(2+) is required as a cofactor.

It carries out the reaction D-ribulose 5-phosphate = (2S)-2-hydroxy-3-oxobutyl phosphate + formate + H(+). It participates in cofactor biosynthesis; riboflavin biosynthesis; 2-hydroxy-3-oxobutyl phosphate from D-ribulose 5-phosphate: step 1/1. Functionally, catalyzes the conversion of D-ribulose 5-phosphate to formate and 3,4-dihydroxy-2-butanone 4-phosphate. This chain is 3,4-dihydroxy-2-butanone 4-phosphate synthase (ribB), found in Helicobacter pylori (strain ATCC 700392 / 26695) (Campylobacter pylori).